A 537-amino-acid polypeptide reads, in one-letter code: Beta-galactoside alpha-2,6-sialyltransferase 2 (537 aa).

Topologically, residues 1 to 10 (MKSWVRQGRR) are cytoplasmic. The chain crosses the membrane as a helical; Signal-anchor for type II membrane protein span at residues 11–31 (LVLVGMLAWVLLFLALLSYFL). At 32–537 (DARVNEPLTS…PGFSTVDCDI (506 aa)) the chain is on the lumenal side. Disordered stretches follow at residues 83-117 (TRDE…PEGI) and 134-202 (GTEN…GDSS). Residues 134–145 (GTENIGSQSDPV) show a composition bias toward polar residues. Residues 166–185 (EEEEEEEEEEERQENEDEDV) show a composition bias toward acidic residues. 3 disulfides stabilise this stretch: C265-C535, C312-C464, and C482-C493. N353 and N373 each carry an N-linked (GlcNAc...) asparagine glycan.

The protein belongs to the glycosyltransferase 29 family.

The protein resides in the golgi apparatus. It is found in the golgi stack membrane. The enzyme catalyses a beta-D-galactoside + CMP-N-acetyl-beta-neuraminate = an N-acetyl-alpha-neuraminyl-(2-&gt;6)-beta-D-galactosyl derivative + CMP + H(+). Functionally, transfers sialic acid from the donor of substrate CMP-sialic acid to galactose containing acceptor substrates. The sequence is that of Beta-galactoside alpha-2,6-sialyltransferase 2 (st6gal2) from Takifugu rubripes (Japanese pufferfish).